We begin with the raw amino-acid sequence, 143 residues long: Large ribosomal subunit protein uL15 (143 aa).

A disordered region spans residues 1–52; the sequence is MELNTIQPADGAKHYKRRVGRGIGSGLGKTAGRGHKGQKSRSGGFHKVGFEG. The segment covering 21-31 has biased composition (gly residues); it reads RGIGSGLGKTA.

Belongs to the universal ribosomal protein uL15 family. Part of the 50S ribosomal subunit.

Binds to the 23S rRNA. The protein is Large ribosomal subunit protein uL15 of Herminiimonas arsenicoxydans.